A 517-amino-acid chain; its full sequence is Ubiquitin carboxyl-terminal hydrolase 30 (517 aa).

Residues 1–35 (MLSSRAQAARTAADKALQRFLRTGAAVRYKVMKNW) are Mitochondrial intermembrane-facing. A helical membrane pass occupies residues 36–56 (GVIGGIAAALAAGIYVIWGPI). Residues 57–517 (TERKKRRKGL…QQGREYRSEE (461 aa)) lie on the Cytoplasmic side of the membrane. The USP domain maps to 68–502 (PGLVNLGNTC…SAYLLFYERV (435 aa)). Cys-77 acts as the Nucleophile in catalysis. Glycyl lysine isopeptide (Lys-Gly) (interchain with G-Cter in ubiquitin) cross-links involve residues Lys-235 and Lys-289. The tract at residues 364–395 (SQHGPKATESPGSALGVQDTQAAPKPGLSQPA) is disordered. The Proton acceptor role is filled by His-452.

It belongs to the peptidase C19 family. Ubiquitinated by parkin (PRKN) at Lys-235 and Lys-289, leading to its degradation.

The protein resides in the mitochondrion outer membrane. It catalyses the reaction Thiol-dependent hydrolysis of ester, thioester, amide, peptide and isopeptide bonds formed by the C-terminal Gly of ubiquitin (a 76-residue protein attached to proteins as an intracellular targeting signal).. Its activity is regulated as follows. Inhibited by the diterpenoid derivative 15-oxospiramilactone (S3). Functionally, deubiquitinating enzyme tethered to the mitochondrial outer membrane that acts as a key inhibitor of mitophagy by counteracting the action of parkin (PRKN): hydrolyzes ubiquitin attached by parkin on target proteins, such as RHOT1/MIRO1 and TOMM20, thereby blocking parkin's ability to drive mitophagy. Preferentially cleaves 'Lys-6'- and 'Lys-11'-linked polyubiquitin chains, 2 types of linkage that participate in mitophagic signaling. Does not cleave efficiently polyubiquitin phosphorylated at 'Ser-65'. Acts as a negative regulator of mitochondrial fusion by mediating deubiquitination of MFN1 and MFN2. The protein is Ubiquitin carboxyl-terminal hydrolase 30 (Usp30) of Rattus norvegicus (Rat).